Consider the following 184-residue polypeptide: Class II hydrophobin 6 (184 aa).

An N-terminal signal peptide occupies residues 1 to 16; that stretch reads MNFMLLSAALASMAVA. 4 cysteine pairs are disulfide-bonded: Cys122/Cys169, Cys130/Cys160, Cys131/Cys143, and Cys170/Cys181.

It belongs to the cerato-ulmin hydrophobin family. Homotetramer. Further self-assembles to form highly ordered films at water-air interfaces through intermolecular interactions. In terms of tissue distribution, expressed in the mycellium.

It localises to the secreted. In terms of biological role, aerial growth, conidiation, and dispersal of filamentous fungi in the environment rely upon a capability of their secreting small amphipathic proteins called hydrophobins (HPBs) with low sequence identity. Class I can self-assemble into an outermost layer of rodlet bundles on aerial cell surfaces, conferring cellular hydrophobicity that supports fungal growth, development and dispersal; whereas Class II form highly ordered films at water-air interfaces through intermolecular interactions but contribute nothing to the rodlet structure. Hcf-6 is a class II hydrophobin that is involved in adhesion and in tomato plants infection. Is secreted to form a coat both around and beneath the fungus. This Passalora fulva (Tomato leaf mold) protein is Class II hydrophobin 6.